The primary structure comprises 1086 residues: MPVPSHVSVATLQSVLQTVCSTGEPAIIAPSSFLGELDTVVDEVKRHGMKLASIPHGGITILPPVPISGTELFDFCAEYCKAQTHEERLAVRHKINNHNFLMQDPLLRMPCRQLYNPADYVLRIVHLCSELVSASEEEYHGAYGVAPLLHINPVQDVCGKLRSMFQSGSLYVKPWILEEEEERREMDESNRGVLFNSDSFGNGRGGSSISSSERSVDENDVADEDLTGEEVVDNATDTVVEYLSEKDFDVVTESGIFYDDSGERVHAIYLRGGIKKELCQRAAIAIEEAATTKNLRKAVNGGKTNPETGIVGYYDYLNNPTQRKCRETEFTRKNWSSVVDSCEPFLVALNKLYSECAPTHYKLQRIAIPHHYQLFNTVFSTMTVNRNFRTAVHTDRGDFRSGLAALCVIDGVFEGCHLAIKKLGKAFRLETGDVLFFDTSLEHGNTEVHNFDYCWKRVSVVCYLRNGLMSQICEMERRRWLQKQMLKQRLLDRSRQSVINLNATDPNLPPIYLPGRLLEVLSPVQQAALGFVVDRLSKGNGCVIALTMGLGKTLLSLALCYSHMYDQNPRDVLILAPKIVLTHWTGEKQKWEKYGLVFSHFVVSDGTDSVSFEIALKRYKQQLNGELPRTSHVFVINPEYIRTVLKKLTGFRPSLIIVDEGHRVSSKGSKLKDWLEGLRCTARVILSGTPVQNNAEELYRLIGWINSDVHSVLPPRVFTDLAGTINRYINGDDSALAAAVSAQRYIQEWMCSYVFSVMKTDLPPLNDYIIICGFSSIQRKMLEDHFGMEGIDGLTSIKASEHRPYHLSTHPLCFLGFISGVYKSLNGNHKLTPEAEEELESQEYASQLYSLTEDDIGLIDECLSLVNSGFLTEFVGLSGKMTVLISILHSIREKKEKAIIFSQYVGSQDFISRTLTSFDIVSSTIRGRDCHERRRRTIEKFREDEKITCLLLSTQIGAYGLDFTAANHVILWDSWWNPQVESQAIARAYRRNQTRAVIVYRLASEFEDTIVLKTQIRKLALFRCIMNEEASRAVPPEELLDCVDTEEDEGRRFLWRSLKKSYLEGGAPAVSKVFRHGDTVRSESWS.

The thymine dioxygenase stretch occupies residues 1–518 (MPVPSHVSVA…PPIYLPGRLL (518 aa)). Residues 187-220 (DESNRGVLFNSDSFGNGRGGSSISSSERSVDEND) are disordered. The Fe cation site is built by His-393, Asp-395, and His-443. A 2-oxoglutarate-binding site is contributed by Arg-457. The DNA Helicase stretch occupies residues 519-1084 (EVLSPVQQAA…RHGDTVRSES (566 aa)). The region spanning 533–708 (VDRLSKGNGC…YRLIGWINSD (176 aa)) is the Helicase ATP-binding domain. 546–553 (LTMGLGKT) is an ATP binding site. A DEAH box motif is present at residues 659–662 (DEGH). Residues 883-1041 (VLISILHSIR…RAVPPEELLD (159 aa)) enclose the Helicase C-terminal domain.

The protein in the C-terminal section; belongs to the SNF2/RAD54 helicase family. It in the N-terminal section; belongs to the TET family. JBP2 subfamily. Fe(2+) is required as a cofactor.

It localises to the nucleus. The enzyme catalyses ATP + H2O = ADP + phosphate + H(+). It catalyses the reaction thymine + 2-oxoglutarate + O2 = 5-hydroxymethyluracil + succinate + CO2. Functionally, dioxygenase that catalyzes the first step of DNA base J (beta-d-glucosyl-HOMedU) biosynthesis by converting thymine to 5-hydroxymethyluracil (HOMedU). DNA base J is a hypermodified thymidine residue found in the genome of kinetoplastid parasites, which is localized primarily to repetitive DNA, namely the telomeres, and is implicated in the regulation of antigenic variation. Probably also acts as a DNA helicase. Recognizes and binds specific regions of the genome, hydrolyzes ATP and allows the DNA base J de novo synthesis. Involved in initial synthesis of DNA base J, JBP1 being able to act via the basal level of DNA base J and propagate further synthesis. In contrast to JBP1, it does not specifically bind DNA base J, however it binds chromatin. The sequence is that of Bifunctional helicase and thymine dioxygenase JBP2 (JBP2) from Trypanosoma cruzi (strain CL Brener).